A 337-amino-acid polypeptide reads, in one-letter code: Tetraacyldisaccharide 4'-kinase (337 aa).

72–79 is a binding site for ATP; sequence TVGGSGKT.

The protein belongs to the LpxK family.

The enzyme catalyses a lipid A disaccharide + ATP = a lipid IVA + ADP + H(+). Its pathway is glycolipid biosynthesis; lipid IV(A) biosynthesis; lipid IV(A) from (3R)-3-hydroxytetradecanoyl-[acyl-carrier-protein] and UDP-N-acetyl-alpha-D-glucosamine: step 6/6. Its function is as follows. Transfers the gamma-phosphate of ATP to the 4'-position of a tetraacyldisaccharide 1-phosphate intermediate (termed DS-1-P) to form tetraacyldisaccharide 1,4'-bis-phosphate (lipid IVA). This Shewanella sediminis (strain HAW-EB3) protein is Tetraacyldisaccharide 4'-kinase.